A 224-amino-acid polypeptide reads, in one-letter code: Deoxyribose-phosphate aldolase (224 aa).

D92 functions as the Proton donor/acceptor in the catalytic mechanism. K155 acts as the Schiff-base intermediate with acetaldehyde in catalysis. The active-site Proton donor/acceptor is K184.

Belongs to the DeoC/FbaB aldolase family. DeoC type 1 subfamily.

Its subcellular location is the cytoplasm. The enzyme catalyses 2-deoxy-D-ribose 5-phosphate = D-glyceraldehyde 3-phosphate + acetaldehyde. The protein operates within carbohydrate degradation; 2-deoxy-D-ribose 1-phosphate degradation; D-glyceraldehyde 3-phosphate and acetaldehyde from 2-deoxy-alpha-D-ribose 1-phosphate: step 2/2. Catalyzes a reversible aldol reaction between acetaldehyde and D-glyceraldehyde 3-phosphate to generate 2-deoxy-D-ribose 5-phosphate. The protein is Deoxyribose-phosphate aldolase of Clostridium perfringens (strain ATCC 13124 / DSM 756 / JCM 1290 / NCIMB 6125 / NCTC 8237 / Type A).